The following is a 335-amino-acid chain: UPF0353 protein MMAR_2288 (335 aa).

2 consecutive transmembrane segments (helical) span residues 18–38 (WFFLFIFVIAGLIAVYVVLQL) and 67–87 (IPAMLLALSLVLFTVAMAGPT). The VWFA domain maps to 98-294 (VVMLVIDVSQ…AELNSVYASL (197 aa)). The chain crosses the membrane as a helical span at residues 309–329 (MGWLRLGALVLVAAALAALLI).

It belongs to the UPF0353 family.

Its subcellular location is the cell membrane. The protein is UPF0353 protein MMAR_2288 of Mycobacterium marinum (strain ATCC BAA-535 / M).